The chain runs to 247 residues: Glucosamine-6-phosphate deaminase (247 aa).

Asp-67 functions as the Proton acceptor; for enolization step in the catalytic mechanism. Residue Asn-136 is the For ring-opening step of the active site. The active-site Proton acceptor; for ring-opening step is the His-138. Glu-143 acts as the For ring-opening step in catalysis.

It belongs to the glucosamine/galactosamine-6-phosphate isomerase family. NagB subfamily.

The enzyme catalyses alpha-D-glucosamine 6-phosphate + H2O = beta-D-fructose 6-phosphate + NH4(+). The protein operates within amino-sugar metabolism; N-acetylneuraminate degradation; D-fructose 6-phosphate from N-acetylneuraminate: step 5/5. Its function is as follows. Catalyzes the reversible isomerization-deamination of glucosamine 6-phosphate (GlcN6P) to form fructose 6-phosphate (Fru6P) and ammonium ion. The polypeptide is Glucosamine-6-phosphate deaminase (Shouchella clausii (strain KSM-K16) (Alkalihalobacillus clausii)).